We begin with the raw amino-acid sequence, 424 residues long: Omega-6 fatty acid desaturase, chloroplastic (424 aa).

The transit peptide at 1-63 directs the protein to the chloroplast; the sequence is MACTLADSLL…TRNKVTVIHA (63 aa). At V64 the chain carries N-acetylvaline. Positions 165 to 169 match the Histidine box-1 motif; it reads HDCAH. The Histidine box-2 signature appears at 201–205; the sequence is HDRHH. Positions 361–365 match the Histidine box-3 motif; the sequence is HIPHH.

It belongs to the fatty acid desaturase type 1 family.

Its subcellular location is the plastid. It localises to the chloroplast membrane. The enzyme catalyses a (9Z)-octadecenoyl-containing glycerolipid + 2 reduced [2Fe-2S]-[ferredoxin] + O2 + 2 H(+) = a (9Z,12Z)-octadecadienoyl-containing glycerolipid + 2 oxidized [2Fe-2S]-[ferredoxin] + 2 H2O. It functions in the pathway lipid metabolism; polyunsaturated fatty acid biosynthesis. Functionally, chloroplast omega-6 fatty acid desaturase introduces the second double bond in the biosynthesis of 16:3 and 18:3 fatty acids, important constituents of plant membranes. It is thought to use ferredoxin as an electron donor and to act on fatty acids esterified to galactolipids, sulfolipids and phosphatidylglycerol. This chain is Omega-6 fatty acid desaturase, chloroplastic, found in Glycine max (Soybean).